A 604-amino-acid chain; its full sequence is Elongation factor 4 (604 aa).

One can recognise a tr-type G domain in the interval 9 to 191 (DAIRNFCIIA…AVISRVPAPA (183 aa)). Residues 21–26 (DHGKST) and 138–141 (NKID) each bind GTP.

Belongs to the TRAFAC class translation factor GTPase superfamily. Classic translation factor GTPase family. LepA subfamily.

It localises to the cell inner membrane. It catalyses the reaction GTP + H2O = GDP + phosphate + H(+). Functionally, required for accurate and efficient protein synthesis under certain stress conditions. May act as a fidelity factor of the translation reaction, by catalyzing a one-codon backward translocation of tRNAs on improperly translocated ribosomes. Back-translocation proceeds from a post-translocation (POST) complex to a pre-translocation (PRE) complex, thus giving elongation factor G a second chance to translocate the tRNAs correctly. Binds to ribosomes in a GTP-dependent manner. The sequence is that of Elongation factor 4 from Prosthecochloris aestuarii (strain DSM 271 / SK 413).